The following is a 506-amino-acid chain: GPI mannosyltransferase 3 (506 aa).

N-linked (GlcNAc...) asparagine glycosylation is present at N115. Transmembrane regions (helical) follow at residues A180–W200, Y229–A249, F257–Y277, Y285–M305, F330–S350, and F358–Q378. Residue N395 is glycosylated (N-linked (GlcNAc...) asparagine).

The protein belongs to the glycosyltransferase 22 family. PIGB subfamily.

The protein resides in the endoplasmic reticulum membrane. It participates in glycolipid biosynthesis; glycosylphosphatidylinositol-anchor biosynthesis. In terms of biological role, mannosyltransferase involved in glycosylphosphatidylinositol-anchor biosynthesis. Transfers the third mannose to Man2-GlcN-acyl-PI during GPI precursor assembly. The chain is GPI mannosyltransferase 3 (gpi10) from Schizosaccharomyces pombe (strain 972 / ATCC 24843) (Fission yeast).